The chain runs to 609 residues: Pentatricopeptide repeat-containing protein At5g13770, chloroplastic (609 aa).

A chloroplast-targeting transit peptide spans 1–44; sequence MAIASGSWVATVNHHANPHSFTSPTKPIFFLSQKPHNFHVCSSR. PPR repeat units lie at residues 103–137, 138–168, 172–207, 208–242, 247–281, 282–316, 317–351, 352–386, 387–421, 422–456, 457–491, 492–526, and 527–561; these read ELRT…KALP, DGQT…FRSD, AVSA…GVEP, SPGC…RLSF, SGSI…GIPE, SSEL…KLLK, DPEM…ELKV, TDCI…ECEA, GQVT…GFDK, CVVA…GCKP, NIWI…KVLP, DKVS…RGKI, and DRAM…GTRL.

Belongs to the PPR family. P subfamily.

Its subcellular location is the plastid. The protein resides in the chloroplast. The chain is Pentatricopeptide repeat-containing protein At5g13770, chloroplastic from Arabidopsis thaliana (Mouse-ear cress).